A 323-amino-acid polypeptide reads, in one-letter code: Glyoxylate/hydroxypyruvate reductase B (323 aa).

A disordered region spans residues A37–E62. Residues R236 and E265 contribute to the active site. The active-site Proton donor is the H284.

This sequence belongs to the D-isomer specific 2-hydroxyacid dehydrogenase family. GhrB subfamily. Homodimer.

The protein resides in the cytoplasm. The enzyme catalyses glycolate + NADP(+) = glyoxylate + NADPH + H(+). The catalysed reaction is (R)-glycerate + NAD(+) = 3-hydroxypyruvate + NADH + H(+). It carries out the reaction (R)-glycerate + NADP(+) = 3-hydroxypyruvate + NADPH + H(+). Functionally, catalyzes the NADPH-dependent reduction of glyoxylate and hydroxypyruvate into glycolate and glycerate, respectively. This chain is Glyoxylate/hydroxypyruvate reductase B (tkrA), found in Enterobacter agglomerans (Erwinia herbicola).